The chain runs to 352 residues: Small ribosomal subunit biogenesis GTPase RsgA 2 (352 aa).

The CP-type G domain occupies 100-257 (RQDGQIIATN…VIDTPGMREL (158 aa)). GTP-binding positions include 147-150 (TKAD) and 199-207 (GSSGVGKST). Positions 278, 283, 285, and 291 each coordinate Zn(2+).

This sequence belongs to the TRAFAC class YlqF/YawG GTPase family. RsgA subfamily. In terms of assembly, monomer. Associates with 30S ribosomal subunit, binds 16S rRNA. It depends on Zn(2+) as a cofactor.

Its subcellular location is the cytoplasm. Its function is as follows. One of several proteins that assist in the late maturation steps of the functional core of the 30S ribosomal subunit. Helps release RbfA from mature subunits. May play a role in the assembly of ribosomal proteins into the subunit. Circularly permuted GTPase that catalyzes slow GTP hydrolysis, GTPase activity is stimulated by the 30S ribosomal subunit. The polypeptide is Small ribosomal subunit biogenesis GTPase RsgA 2 (Lactiplantibacillus plantarum (strain ATCC BAA-793 / NCIMB 8826 / WCFS1) (Lactobacillus plantarum)).